A 367-amino-acid chain; its full sequence is 3-dehydroquinate synthase (367 aa).

NAD(+) contacts are provided by residues 69-74, 103-107, 127-128, K140, and K149; these read DGEAFK, GVIGD, and TT. E182, H245, and H262 together coordinate Zn(2+).

The protein belongs to the sugar phosphate cyclases superfamily. Dehydroquinate synthase family. Co(2+) serves as cofactor. Zn(2+) is required as a cofactor. It depends on NAD(+) as a cofactor.

It is found in the cytoplasm. It carries out the reaction 7-phospho-2-dehydro-3-deoxy-D-arabino-heptonate = 3-dehydroquinate + phosphate. The protein operates within metabolic intermediate biosynthesis; chorismate biosynthesis; chorismate from D-erythrose 4-phosphate and phosphoenolpyruvate: step 2/7. Catalyzes the conversion of 3-deoxy-D-arabino-heptulosonate 7-phosphate (DAHP) to dehydroquinate (DHQ). The sequence is that of 3-dehydroquinate synthase from Pseudomonas syringae pv. syringae (strain B728a).